Consider the following 1142-residue polypeptide: Protein kinase C-like (1142 aa).

An REM-1 1 domain is found at 1 to 67 (MNDEDKVHDI…LRELQMRRLG (67 aa)). The interval 70–139 (VDNMSLGASP…PPDSNVPRAR (70 aa)) is disordered. Residues 149–226 (KFDTPHLGPR…LKRYEELHID (78 aa)) enclose the REM-1 2 domain. The region spanning 231–349 (GPDDDSINLP…LRRKKIEAEM (119 aa)) is the C2 domain. The segment at 357–403 (ADRVGSRAPPPQFPMGAQSPQFAAPPTSPGSQEQNTMIPPQAPPPSQ) is disordered. The span at 385–394 (PGSQEQNTMI) shows a compositional bias: polar residues. Phorbol-ester/DAG-type zinc fingers lie at residues 457–505 (GHKF…VTKC) and 525–576 (PHRF…PDFC). 2 disordered regions span residues 592-622 (TQKKTHKDKASSMSERTLRPGSKTSISSGSI) and 651-807 (SQTT…TDPG). The segment covering 613-622 (SKTSISSGSI) has biased composition (polar residues). Low complexity-rich tracts occupy residues 663 to 677 (TSTSSTTASAAAAAA), 712 to 724 (SAQQQQGYGSPQQ), and 741 to 765 (PQARPQQQQQQQQQTPQQVSPMYQQ). Positions 817–1076 (FNFLAVLGKG…AQEIMSQPFF (260 aa)) constitute a Protein kinase domain. ATP-binding positions include 823-831 (LGKGNFGKV) and lysine 846. The active-site Proton acceptor is aspartate 942. The 66-residue stretch at 1077-1142 (RNINWDDIYH…RGFSYTADFE (66 aa)) folds into the AGC-kinase C-terminal domain.

This sequence belongs to the protein kinase superfamily. AGC Ser/Thr protein kinase family. PKC subfamily.

It catalyses the reaction L-seryl-[protein] + ATP = O-phospho-L-seryl-[protein] + ADP + H(+). The enzyme catalyses L-threonyl-[protein] + ATP = O-phospho-L-threonyl-[protein] + ADP + H(+). The sequence is that of Protein kinase C-like from Neurospora crassa (strain ATCC 24698 / 74-OR23-1A / CBS 708.71 / DSM 1257 / FGSC 987).